Reading from the N-terminus, the 154-residue chain is Jupiter microtubule associated homolog 1 (154 aa).

An N-acetylmethionine modification is found at M1. Residues 1–19 (MTTTTTFKGVDPNSRNSSR) show a composition bias toward polar residues. The segment at 1–154 (MTTTTTFKGV…PGGKSSLVLG (154 aa)) is disordered. T2 is modified (N-acetylthreonine; in Hematological and neurological expressed 1 protein, N-terminally processed). 2 positions are modified to phosphoserine: S28 and S31. A compositionally biased stretch (polar residues) spans 47 to 59 (MASNIFGTPEENQ). Phosphothreonine is present on T54. Low complexity predominate over residues 60–71 (ASWAKSAGAKSS). Phosphoserine occurs at positions 71, 80, 87, 88, and 92. The span at 80 to 91 (SGLQRRNSSEAS) shows a compositional bias: polar residues. Basic and acidic residues predominate over residues 96 to 108 (LDLKGEGDIHENV). Positions 125 to 138 (PAAPVPSPVAPAPV) are enriched in pro residues. At S131 the chain carries Phosphoserine. The residue at position 148 (K148) is an N6-acetyllysine.

The protein belongs to the JUPITER family. In terms of assembly, interacts with the complex composed, at least, of APC, CTNNB1 and GSK3B; the interaction takes place with the inactive form of GSK3B (phosphorylated at 'Ser-9'). In terms of tissue distribution, expressed in testis, skeletal muscle, thymus, prostate, colon, peripheral blood cells, brain and placenta.

The protein localises to the nucleus. The protein resides in the cytoplasm. Functionally, modulates negatively AKT-mediated GSK3B signaling. Induces CTNNB1 'Ser-33' phosphorylation and degradation through the suppression of the inhibitory 'Ser-9' phosphorylation of GSK3B, which represses the function of the APC:CTNNB1:GSK3B complex and the interaction with CDH1/E-cadherin in adherent junctions. Plays a role in the regulation of cell cycle and cell adhesion. Has an inhibitory role on AR-signaling pathway through the induction of receptor proteasomal degradation. This chain is Jupiter microtubule associated homolog 1, found in Homo sapiens (Human).